A 284-amino-acid polypeptide reads, in one-letter code: Ribosomal RNA small subunit methyltransferase A (284 aa).

S-adenosyl-L-methionine-binding residues include asparagine 26, leucine 28, glycine 53, glutamate 74, aspartate 97, and asparagine 127.

Belongs to the class I-like SAM-binding methyltransferase superfamily. rRNA adenine N(6)-methyltransferase family. RsmA subfamily.

Its subcellular location is the cytoplasm. The enzyme catalyses adenosine(1518)/adenosine(1519) in 16S rRNA + 4 S-adenosyl-L-methionine = N(6)-dimethyladenosine(1518)/N(6)-dimethyladenosine(1519) in 16S rRNA + 4 S-adenosyl-L-homocysteine + 4 H(+). Its function is as follows. Specifically dimethylates two adjacent adenosines (A1518 and A1519) in the loop of a conserved hairpin near the 3'-end of 16S rRNA in the 30S particle. May play a critical role in biogenesis of 30S subunits. In Anaeromyxobacter dehalogenans (strain 2CP-1 / ATCC BAA-258), this protein is Ribosomal RNA small subunit methyltransferase A.